The sequence spans 334 residues: Protein-methionine-sulfoxide reductase catalytic subunit MsrP (334 aa).

Residues 1 to 44 (MKKNQFLKESDVTAESVFFMKRRQVLKALGISAAALSLPHAAHA) constitute a signal peptide (tat-type signal). Residues N88, 91 to 92 (YE), C146, T181, N233, R238, and 249 to 251 (GIK) contribute to the Mo-molybdopterin site.

It belongs to the MsrP family. Heterodimer of a catalytic subunit (MsrP) and a heme-binding subunit (MsrQ). Mo-molybdopterin is required as a cofactor. Predicted to be exported by the Tat system. The position of the signal peptide cleavage has not been experimentally proven.

The protein resides in the periplasm. It catalyses the reaction L-methionyl-[protein] + a quinone + H2O = L-methionyl-(S)-S-oxide-[protein] + a quinol. The catalysed reaction is L-methionyl-[protein] + a quinone + H2O = L-methionyl-(R)-S-oxide-[protein] + a quinol. In terms of biological role, part of the MsrPQ system that repairs oxidized periplasmic proteins containing methionine sulfoxide residues (Met-O), using respiratory chain electrons. Thus protects these proteins from oxidative-stress damage caused by reactive species of oxygen and chlorine generated by the host defense mechanisms. MsrPQ is essential for the maintenance of envelope integrity under bleach stress, rescuing a wide series of structurally unrelated periplasmic proteins from methionine oxidation, including the primary periplasmic chaperone SurA and the lipoprotein Pal. The catalytic subunit MsrP is non-stereospecific, being able to reduce both (R-) and (S-) diastereoisomers of methionine sulfoxide. The protein is Protein-methionine-sulfoxide reductase catalytic subunit MsrP of Escherichia coli O81 (strain ED1a).